Consider the following 911-residue polypeptide: Envelope glycoprotein B (911 aa).

A signal peptide spans M1–C30. At A31–P778 the chain is on the virion surface side. Cystine bridges form between C86/C543, C103/C499, C177/C239, C330/C378, and C566/C635. N-linked (GlcNAc...) asparagine; by host glycans are attached at residues N111 and N130. Residues T143–L149 are involved in fusion and/or binding to host membrane. N-linked (GlcNAc...) asparagine; by host glycosylation occurs at N221. Residues A228–T233 are involved in fusion and/or binding to host membrane. 5 N-linked (GlcNAc...) asparagine; by host glycosylation sites follow: N347, N369, N384, N438, and N594. The interval R591–Q610 is disordered. The segment covering G599–Q610 has biased composition (low complexity). N662 carries an N-linked (GlcNAc...) asparagine; by host glycan. A hydrophobic membrane proximal region region spans residues L722–A776. Residues F779–F799 form a helical membrane-spanning segment. Residues R800–L911 are Intravirion-facing.

It belongs to the herpesviridae glycoprotein B family. In terms of assembly, homotrimer; disulfide-linked. Binds to heparan sulfate proteoglycans. Interacts with gH/gL heterodimer.

The protein localises to the virion membrane. It localises to the host cell membrane. It is found in the host endosome membrane. Its subcellular location is the host Golgi apparatus membrane. In terms of biological role, envelope glycoprotein that forms spikes at the surface of virion envelope. Essential for the initial attachment to heparan sulfate moieties of the host cell surface proteoglycans. Involved in fusion of viral and cellular membranes leading to virus entry into the host cell. Following initial binding to its host receptors, membrane fusion is mediated by the fusion machinery composed at least of gB and the heterodimer gH/gL. May be involved in the fusion between the virion envelope and the outer nuclear membrane during virion egress. The chain is Envelope glycoprotein B from Amazona oratrix (yellow-headed parrot).